Here is a 79-residue protein sequence, read N- to C-terminus: Protein OPG081 (79 aa).

At Val-2 to Leu-8 the chain is on the intravirion side. Residues Thr-9–Val-29 form a helical membrane-spanning segment. At Lys-30–Arg-47 the chain is on the virion surface side. The helical transmembrane segment at Ala-48 to Tyr-68 threads the bilayer. Residues Ala-69–Ser-79 lie on the Intravirion side of the membrane.

The protein belongs to the orthopoxvirus OPG081 family.

It is found in the virion membrane. Functionally, envelope protein. In Vaccinia virus (strain Western Reserve) (VACV), this protein is Protein OPG081 (OPG081).